Reading from the N-terminus, the 629-residue chain is uncharacterized protein (629 aa).

The region spanning 4–255 (LKAENLYKTY…KRAEREAQAE (252 aa)) is the ABC transporter 1 domain. Residue 36-43 (GPNGTGKS) participates in ATP binding. The disordered stretch occupies residues 284 to 304 (KARIDRVETLKEQTGPQSSGS). Over residues 285 to 294 (ARIDRVETLK) the composition is skewed to basic and acidic residues. Over residues 295-304 (EQTGPQSSGS) the composition is skewed to polar residues. The region spanning 319–537 (IEAENVMIAY…EESKAKKAAP (219 aa)) is the ABC transporter 2 domain. Position 351–358 (351–358 (GPNGIGKT)) interacts with ATP. The disordered stretch occupies residues 530-555 (SKAKKAAPKPAAEEKTAEAEPKKKRK). Residues 540-550 (AAEEKTAEAEP) show a composition bias toward basic and acidic residues. The stretch at 560–629 (KDQLEWDGIE…LSLMIEELES (70 aa)) forms a coiled coil.

It belongs to the ABC transporter superfamily.

This is an uncharacterized protein from Bacillus subtilis (strain 168).